We begin with the raw amino-acid sequence, 77 residues long: U8-lycotoxin-Ls1u (77 aa).

Residues methionine 1–alanine 20 form the signal peptide. A propeptide spanning residues glutamine 21–lysine 26 is cleaved from the precursor.

It belongs to the neurotoxin 19 (CSTX) family. 08 (U8-Lctx) subfamily. In terms of processing, contains 4 disulfide bonds. As to expression, expressed by the venom gland.

Its subcellular location is the secreted. The polypeptide is U8-lycotoxin-Ls1u (Lycosa singoriensis (Wolf spider)).